A 294-amino-acid polypeptide reads, in one-letter code: MSNLKEIKRKIKSVHNTQKTTNAMKLVSTAKLKKAEEAAKRSKIYAQKIDEILSEISFQINKIVHNEDDVRLSLFHKKEQIKTVDLIFITADKGLCGGFNIKTLKTVSEMLKEYEAKNINIRLRAIGKTGIEYFNFQKIELLEKYFHLSSSPDYEKACEVIHAAVDDFLNGNTDEVILVHNGYKNMITQELKINHLIPVEPKSIEQTHNSLLELEPEGTELLKDLMKTYFEYNMYYALIDSLAAEHSARMQAMDNATNNAKARVKQLNLAYNKARQESITTELIEIISGVESMK.

This sequence belongs to the ATPase gamma chain family. F-type ATPases have 2 components, CF(1) - the catalytic core - and CF(0) - the membrane proton channel. CF(1) has five subunits: alpha(3), beta(3), gamma(1), delta(1), epsilon(1). CF(0) has three main subunits: a, b and c.

It is found in the cell inner membrane. Produces ATP from ADP in the presence of a proton gradient across the membrane. The gamma chain is believed to be important in regulating ATPase activity and the flow of protons through the CF(0) complex. The chain is ATP synthase gamma chain from Campylobacter jejuni subsp. jejuni serotype O:2 (strain ATCC 700819 / NCTC 11168).